The primary structure comprises 208 residues: Ras-related protein Rab6 (208 aa).

Residue 19–27 (GEQSVGKTS) participates in GTP binding. Positions 41-49 (YQATIGIDF) match the Effector region motif. Residues 67–71 (DTAGQ), 125–128 (NKTD), and 155–157 (SAK) contribute to the GTP site. The segment at 176–208 (MDSTENKPSEDMQEVVLKDSPNETKDPEGGCAC) is disordered. The span at 179–208 (TENKPSEDMQEVVLKDSPNETKDPEGGCAC) shows a compositional bias: basic and acidic residues.

The protein belongs to the small GTPase superfamily. Rab family. In terms of assembly, interacts with Rich and Act5C. Interacts with BicD (via C-terminal domain). Interacts (in GTP-bound) with GCC1/CG10703 and cbs. Interacts with Gorab (via C-terminus); binds to a Gorab homodimer, this interaction seems to be required for trans-Golgi localization of Gorab. As to expression, expressed in larval eye, wing and leg imaginal disks and in salivary gland. Expressed in the larval optic lobe, showing an enrichment in the neuropil. In the adult brain, expressed in photoreceptors and mushroom body.

It localises to the golgi apparatus membrane. It is found in the synapse. The protein localises to the perikaryon. In terms of biological role, protein transport. Regulator of membrane traffic from the Golgi apparatus towards the endoplasmic reticulum (ER). Mediates membrane trafficking during egg chamber growth and organization, possibly upstream of exocyst component Sec5. Also during oogenesis, plays a role, together with BicD but independently of Sec5, in the polarization of the oocyte microtubule cytoskeleton, in the localization of oskar mRNA and in the anterodorsal secretion of grk. Required for anterograde opsin transport through the ER-Golgi complex. Plays a role, together with Rich, in regulating CadN transport in photoreceptor cells which is required for the formation of normal synaptic connections between axons from the inner photoreceptor cells in the eye and postsynaptic cells in the brain medulla layer M6. Necessary for proper development of bristle shafts of macrochaete and microchaete on the head, thorax and scutellum. Modulates Notch signaling. As a key regulator of vesicular traffic, plays a critical role in the regulation of actin organization and is required for normal rates of phagocytic uptake during phagocytosis involved in defense against viral and fungal infection. In Drosophila melanogaster (Fruit fly), this protein is Ras-related protein Rab6.